A 466-amino-acid polypeptide reads, in one-letter code: 3-isopropylmalate dehydratase large subunit (466 aa).

[4Fe-4S] cluster is bound by residues C347, C407, and C410.

It belongs to the aconitase/IPM isomerase family. LeuC type 1 subfamily. In terms of assembly, heterodimer of LeuC and LeuD. [4Fe-4S] cluster serves as cofactor.

The catalysed reaction is (2R,3S)-3-isopropylmalate = (2S)-2-isopropylmalate. Its pathway is amino-acid biosynthesis; L-leucine biosynthesis; L-leucine from 3-methyl-2-oxobutanoate: step 2/4. In terms of biological role, catalyzes the isomerization between 2-isopropylmalate and 3-isopropylmalate, via the formation of 2-isopropylmaleate. The sequence is that of 3-isopropylmalate dehydratase large subunit from Vibrio vulnificus (strain YJ016).